The primary structure comprises 379 residues: Probable homogentisate phytyltransferase 2, chloroplastic (379 aa).

Residues 1-39 (MASLASPPLPCRAAATASRSGRPAPRLLGPPPPPASPLL) form a disordered region. A chloroplast-targeting transit peptide spans 1-65 (MASLASPPLP…WSRRDAVRVC (65 aa)). 8 helical membrane passes run 121 to 141 (WLVF…GYIV), 174 to 194 (LVVL…GPFI), 195 to 215 (TSLY…PFRL), 220 to 240 (VAAF…GVYY), 252 to 272 (WSSP…VIAI), 299 to 319 (IAFL…AVAF), 328 to 348 (TVMV…TWVL), and 361 to 378 (YYRF…FFPL).

The protein belongs to the UbiA prenyltransferase family.

It is found in the plastid. The protein resides in the chloroplast thylakoid membrane. It catalyses the reaction phytyl diphosphate + homogentisate + H(+) = 2-methyl-6-phytyl-1,4-benzene-1,4-diol + CO2 + diphosphate. It functions in the pathway cofactor biosynthesis; tocopherol biosynthesis. Involved in the synthesis of tocopherol (vitamin E). Catalyzes the condensation of homogentisate and phytyl diphosphate to form dimethylphytylhydrquinone. This Oryza sativa subsp. japonica (Rice) protein is Probable homogentisate phytyltransferase 2, chloroplastic (HPT2).